The following is a 348-amino-acid chain: 3',5'-cyclic-nucleotide phosphodiesterase (348 aa).

Mn(2+) serves as cofactor.

It carries out the reaction a nucleoside 3',5'-cyclic phosphate + H2O = a nucleoside 5'-phosphate + H(+). Functionally, hydrolyzes cAMP to 5'-AMP and cGMP to 5'-GMP. Does not show phosphohydrolase activity toward various phosphatidylcholine and phosphorylated sugars. This chain is 3',5'-cyclic-nucleotide phosphodiesterase, found in Helicobacter pylori (strain ATCC 700392 / 26695) (Campylobacter pylori).